Consider the following 55-residue polypeptide: Large ribosomal subunit protein bL33 (55 aa).

The protein belongs to the bacterial ribosomal protein bL33 family.

The polypeptide is Large ribosomal subunit protein bL33 (Caulobacter vibrioides (strain ATCC 19089 / CIP 103742 / CB 15) (Caulobacter crescentus)).